The primary structure comprises 617 residues: V-type proton ATPase catalytic subunit A (617 aa).

257–264 (GAFGCGKT) is a binding site for ATP.

This sequence belongs to the ATPase alpha/beta chains family. V-ATPase is a heteromultimeric enzyme composed of a peripheral catalytic V1 complex (components A to H) attached to an integral membrane V0 proton pore complex (components: a, c, c', c'', d, e, f and VOA1).

The protein localises to the vacuole membrane. The enzyme catalyses ATP + H2O + 4 H(+)(in) = ADP + phosphate + 5 H(+)(out). In terms of biological role, catalytic subunit of the V1 complex of vacuolar(H+)-ATPase (V-ATPase), a multisubunit enzyme composed of a peripheral complex (V1) that hydrolyzes ATP and a membrane integral complex (V0) that translocates protons. V-ATPase is responsible for acidifying and maintaining the pH of intracellular compartments. The sequence is that of V-type proton ATPase catalytic subunit A (VMA1) from Eremothecium gossypii (strain ATCC 10895 / CBS 109.51 / FGSC 9923 / NRRL Y-1056) (Yeast).